The primary structure comprises 104 residues: Large ribosomal subunit protein bL21 (104 aa).

It belongs to the bacterial ribosomal protein bL21 family. As to quaternary structure, part of the 50S ribosomal subunit. Contacts protein L20.

In terms of biological role, this protein binds to 23S rRNA in the presence of protein L20. In Pseudomonas putida (strain GB-1), this protein is Large ribosomal subunit protein bL21.